Reading from the N-terminus, the 169-residue chain is Large ribosomal subunit protein uL5 (169 aa).

It belongs to the universal ribosomal protein uL5 family. In terms of assembly, part of the 50S ribosomal subunit; contacts the 5S rRNA and probably tRNA. Forms a bridge to the 30S subunit in the 70S ribosome.

This is one of the proteins that bind and probably mediate the attachment of the 5S RNA into the large ribosomal subunit, where it forms part of the central protuberance. In the 70S ribosome it contacts protein S13 of the 30S subunit (bridge B1b), connecting the 2 subunits; this bridge is implicated in subunit movement. May contact the P site tRNA; the 5S rRNA and some of its associated proteins might help stabilize positioning of ribosome-bound tRNAs. This chain is Large ribosomal subunit protein uL5, found in Cenarchaeum symbiosum (strain A).